Reading from the N-terminus, the 822-residue chain is Tubulin polyglutamylase TTLL6 (822 aa).

The interval 1 to 24 (MLQCLTSESEEGAEEREESSTEDL) is disordered. Over residues 8–24 (ESEEGAEEREESSTEDL) the composition is skewed to acidic residues. The region spanning 57–400 (KKRLVINLSN…GNCDKKKVLE (344 aa)) is the TTL domain. Residues Lys174, 180–181 (QG), 202–205 (QLYI), and 215–217 (KFD) contribute to the ATP site. Residue Gln180 coordinates a protein. Residue Arg241 coordinates L-glutamate. ATP is bound at residue 263 to 264 (TN). Residues Tyr265, Ser266, and Lys283 each coordinate L-glutamate. Positions 346, 359, and 361 each coordinate Mg(2+). His362 is an a protein binding site. The tract at residues 371–450 (KLDKEVKDSL…CGGFRLIYPG (80 aa)) is c-MTBD region. Lys377 contributes to the L-glutamate binding site. Disordered stretches follow at residues 736 to 772 (PLFP…SVFV) and 791 to 822 (TQAR…TATA). Residues 802–814 (SHSGTTTRDSSTQ) show a composition bias toward polar residues.

This sequence belongs to the tubulin--tyrosine ligase family. Found in a complex with CEP41. Mg(2+) serves as cofactor. In terms of tissue distribution, highly expressed in testis. Expressed in brain, heart, kidney, liver, lung, muscle and trachea. In the brain, specifically expressed in ependymal cilia.

Its subcellular location is the cytoplasm. It localises to the cytoskeleton. It is found in the cilium axoneme. The protein resides in the cilium basal body. It catalyses the reaction L-glutamyl-[protein] + L-glutamate + ATP = gamma-L-glutamyl-L-glutamyl-[protein] + ADP + phosphate + H(+). The enzyme catalyses (L-glutamyl)(n)-gamma-L-glutamyl-L-glutamyl-[protein] + L-glutamate + ATP = (L-glutamyl)(n+1)-gamma-L-glutamyl-L-glutamyl-[protein] + ADP + phosphate + H(+). Polyglutamylase which modifies both tubulin and non-tubulin proteins, generating alpha-linked polyglutamate side chains on the gamma-carboxyl group of specific glutamate residues of target proteins. Preferentially mediates ATP-dependent long polyglutamate chain elongation over the initiation step of the polyglutamylation reaction. Preferentially modifies the alpha-tubulin tail over a beta-tail. Promotes tubulin polyglutamylation which stimulates spastin/SPAST-mediated microtubule severing, thereby regulating microtubule functions. Mediates microtubule polyglutamylation in primary cilia axoneme which is important for ciliary structural formation and motility. Mediates microtubule polyglutamylation in motile cilia, necessary for the regulation of ciliary coordinated beating. Polyglutamylates non-tubulin protein nucleotidyltransferase CGAS, leading to CGAS DNA-binding inhibition, thereby preventing antiviral defense response. The polypeptide is Tubulin polyglutamylase TTLL6 (Mus musculus (Mouse)).